Here is a 500-residue protein sequence, read N- to C-terminus: Cytochrome P450 11B2, mitochondrial (500 aa).

Residues 1 to 24 (MALRVTADVWLARPWQCLHRTRAL) constitute a mitochondrion transit peptide. Residue Phe-381 coordinates 21-hydroxyprogesterone. Residue Cys-447 participates in heme binding.

This sequence belongs to the cytochrome P450 family. Heme serves as cofactor.

The protein resides in the mitochondrion inner membrane. It carries out the reaction a steroid + 2 reduced [adrenodoxin] + O2 + 2 H(+) = an 11beta-hydroxysteroid + 2 oxidized [adrenodoxin] + H2O. The enzyme catalyses 21-hydroxyprogesterone + 2 reduced [adrenodoxin] + O2 + 2 H(+) = corticosterone + 2 oxidized [adrenodoxin] + H2O. It catalyses the reaction corticosterone + 2 reduced [adrenodoxin] + O2 + 2 H(+) = 18-hydroxycorticosterone + 2 oxidized [adrenodoxin] + H2O. The catalysed reaction is 18-hydroxycorticosterone + 2 reduced [adrenodoxin] + O2 + 2 H(+) = aldosterone + 2 oxidized [adrenodoxin] + 2 H2O. It carries out the reaction 11-deoxycortisol + 2 reduced [adrenodoxin] + O2 + 2 H(+) = cortisol + 2 oxidized [adrenodoxin] + H2O. The enzyme catalyses 21-hydroxyprogesterone + 2 reduced [adrenodoxin] + O2 + 2 H(+) = 18-hydroxy-11-deoxycorticosterone + 2 oxidized [adrenodoxin] + H2O. It catalyses the reaction cortisol + 2 reduced [adrenodoxin] + O2 + 2 H(+) = 18-hydroxycortisol + 2 oxidized [adrenodoxin] + H2O. The catalysed reaction is 18-hydroxycortisol + 2 reduced [adrenodoxin] + O2 + 2 H(+) = 18-oxocortisol + 2 oxidized [adrenodoxin] + 2 H2O. It participates in steroid biosynthesis. In terms of biological role, a cytochrome P450 monooxygenase that catalyzes the biosynthesis of aldosterone, the main mineralocorticoid in the human body responsible for salt and water homeostasis, thus involved in blood pressure regulation, arterial hypertension, and the development of heart failure. Catalyzes three sequential oxidative reactions of 11-deoxycorticosterone (21-hydroxyprogesterone), namely 11-beta hydroxylation, followed by two successive oxidations at C18 yielding 18-hydroxy and then 18-oxo intermediates (that would not leave the enzyme active site during the consecutive hydroxylation reactions), ending with the formation of aldosterone. Can also produce 18-hydroxycortisol and 18-oxocortisol, derived from successive oxidations of cortisol at C18, normally found at very low levels, but significantly increased in primary aldosteronism, the most common form of secondary hypertension. Mechanistically, uses molecular oxygen inserting one oxygen atom into a substrate and reducing the second into a water molecule. Two electrons are provided by NADPH via a two-protein mitochondrial transfer system comprising flavoprotein FDXR (adrenodoxin/ferredoxin reductase) and nonheme iron-sulfur protein FDX1 or FDX2 (adrenodoxin/ferredoxin). Could also be involved in the androgen metabolic pathway. This is Cytochrome P450 11B2, mitochondrial (Cyp11b2) from Mus musculus (Mouse).